Consider the following 148-residue polypeptide: 3-hydroxyacyl-[acyl-carrier-protein] dehydratase FabZ (148 aa).

His48 is an active-site residue.

It belongs to the thioester dehydratase family. FabZ subfamily.

It is found in the cytoplasm. It carries out the reaction a (3R)-hydroxyacyl-[ACP] = a (2E)-enoyl-[ACP] + H2O. Its function is as follows. Involved in unsaturated fatty acids biosynthesis. Catalyzes the dehydration of short chain beta-hydroxyacyl-ACPs and long chain saturated and unsaturated beta-hydroxyacyl-ACPs. The protein is 3-hydroxyacyl-[acyl-carrier-protein] dehydratase FabZ of Acinetobacter baylyi (strain ATCC 33305 / BD413 / ADP1).